A 193-amino-acid chain; its full sequence is Probable thymidylate kinase (193 aa).

Gly7–Thr14 is a binding site for ATP.

This sequence belongs to the thymidylate kinase family.

It carries out the reaction dTMP + ATP = dTDP + ADP. This is Probable thymidylate kinase from Pyrobaculum calidifontis (strain DSM 21063 / JCM 11548 / VA1).